The primary structure comprises 55 residues: Cytochrome c oxidase subunit 7s (55 aa).

Residues 13–35 (LVQDIGVALILGSIAGCFFKYGV) form a helical membrane-spanning segment.

In terms of assembly, slime mold cytochrome c oxidase consists of at least seven different polypeptides species, subunits I, II, III, IV, V, VI, and VIIe/s in order of MW.

The protein localises to the mitochondrion inner membrane. It carries out the reaction 4 Fe(II)-[cytochrome c] + O2 + 8 H(+)(in) = 4 Fe(III)-[cytochrome c] + 2 H2O + 4 H(+)(out). Its function is as follows. This protein is one of the nuclear-coded polypeptide chains of cytochrome c oxidase, the terminal oxidase in mitochondrial electron transport. The polypeptide is Cytochrome c oxidase subunit 7s (cxgS) (Dictyostelium discoideum (Social amoeba)).